Reading from the N-terminus, the 350-residue chain is Hydroxymethylglutaryl-CoA synthase (350 aa).

Glu-83 (proton donor/acceptor) is an active-site residue. The Acyl-thioester intermediate role is filled by Cys-115. Positions 115 and 156 each coordinate (3S)-3-hydroxy-3-methylglutaryl-CoA. Arg-204 contacts CoA. Positions 206 and 239 each coordinate (3S)-3-hydroxy-3-methylglutaryl-CoA. His-239 serves as the catalytic Proton donor/acceptor. Lys-244 provides a ligand contact to CoA. Positions 271 and 301 each coordinate (3S)-3-hydroxy-3-methylglutaryl-CoA.

The protein belongs to the thiolase-like superfamily. Archaeal HMG-CoA synthase family. As to quaternary structure, interacts with acetoacetyl-CoA thiolase that catalyzes the precedent step in the pathway and with a DUF35 protein. The acetoacetyl-CoA thiolase/HMG-CoA synthase complex channels the intermediate via a fused CoA-binding site, which allows for efficient coupling of the endergonic thiolase reaction with the exergonic HMGCS reaction.

The enzyme catalyses acetoacetyl-CoA + acetyl-CoA + H2O = (3S)-3-hydroxy-3-methylglutaryl-CoA + CoA + H(+). It functions in the pathway metabolic intermediate biosynthesis; (R)-mevalonate biosynthesis; (R)-mevalonate from acetyl-CoA: step 2/3. Catalyzes the condensation of acetyl-CoA with acetoacetyl-CoA to form 3-hydroxy-3-methylglutaryl-CoA (HMG-CoA). Functions in the mevalonate (MVA) pathway leading to isopentenyl diphosphate (IPP), a key precursor for the biosynthesis of isoprenoid compounds that are building blocks of archaeal membrane lipids. This is Hydroxymethylglutaryl-CoA synthase from Thermococcus gammatolerans (strain DSM 15229 / JCM 11827 / EJ3).